We begin with the raw amino-acid sequence, 334 residues long: Heat-inducible transcription repressor HrcA (334 aa).

The protein belongs to the HrcA family.

Functionally, negative regulator of class I heat shock genes (grpE-dnaK-dnaJ and groELS operons). Prevents heat-shock induction of these operons. The protein is Heat-inducible transcription repressor HrcA of Albidiferax ferrireducens (strain ATCC BAA-621 / DSM 15236 / T118) (Rhodoferax ferrireducens).